A 354-amino-acid polypeptide reads, in one-letter code: G-protein coupled receptor homolog US28 (354 aa).

Residues Met-1 to Leu-37 lie on the Extracellular side of the membrane. A glycan (N-linked (GlcNAc...) asparagine; by host) is linked at Asn-30. The helical transmembrane segment at Phe-38–Ile-58 threads the bilayer. At Thr-59 to Asp-69 the chain is on the cytoplasmic side. The helical transmembrane segment at Val-70 to Met-90 threads the bilayer. The Extracellular portion of the chain corresponds to Gln-91–Ser-101. The chain crosses the membrane as a helical span at residues Val-102–Ile-122. Residues Thr-123–Cys-145 lie on the Cytoplasmic side of the membrane. The chain crosses the membrane as a helical span at residues Leu-146–Val-166. The Extracellular segment spans residues Thr-167–Ser-183. A helical membrane pass occupies residues Tyr-184–Ile-204. Topologically, residues Ser-205–Arg-228 are cytoplasmic. Residues Val-229–Phe-249 form a helical membrane-spanning segment. Topologically, residues Val-250 to Leu-273 are extracellular. A helical transmembrane segment spans residues Ile-274–Val-294. Over Gly-295 to Pro-354 the chain is Cytoplasmic.

Belongs to the G-protein coupled receptor 1 family. Interacts with host GPRASP1; this interaction targets US28 to lysosomes for degradation. Interacts with host CX3CL1/Fractalkine (via N-terminus). Interacts with host Gi alpha-1 subunit GNAI1; this interaction does not lead to the catalytic activation of Gi complex. Phosphorylated. High phosphorylation occurs concomitantly with receptor endocytosis and correlate with low receptor presence at the plasma membrane.

It localises to the host cell membrane. Its function is as follows. Binds to a great number of different CC-chemokines including CCL5/RANTES, CCL2/MCP-1, CCL3/MIP-1-alpha as well as CX3CL1/Fractalkine. Transduces signals resulting in the activation of MAP kinase signaling pathways and augmentation of intracellular calcium ion levels, leading to alterations in chemotactic behavior of vascular smooth muscle cells and macrophages. The US28 receptor also exhibits high levels of agonist-independent signaling activity and agonist-independent endocytosis. Interacts with the host Gi complex without activating it, thereby probably interfering with the chemokine-Gi signaling. May also function as a G protein sink to sequester G protein from the cell surface via internalization. Interacts with endogenous Gaq/11 subunits and thereby constitutively activates phospholipase C. This Homo sapiens (Human) protein is G-protein coupled receptor homolog US28 (US28).